The chain runs to 327 residues: Microtubule-associated protein RP/EB family member 2 (327 aa).

Over residues M1–D17 the composition is skewed to polar residues. The disordered stretch occupies residues M1 to H20. The Calponin-homology (CH) domain occupies T56–D158. Disordered stretches follow at residues E170–L238 and L295–Y327. Residues S234 to H304 form the EB1 C-terminal domain.

Belongs to the MAPRE family.

The protein localises to the cytoplasm. The protein resides in the cytoskeleton. May be involved in microtubule polymerization, and spindle function by stabilizing microtubules and anchoring them at centrosomes. This chain is Microtubule-associated protein RP/EB family member 2 (mapre2), found in Xenopus laevis (African clawed frog).